Here is a 210-residue protein sequence, read N- to C-terminus: Redox-sensing transcriptional repressor Rex (210 aa).

The H-T-H motif DNA-binding region spans 17 to 56 (SYLHLVKKAEADKLEYISGTVIAEELELEPIQVRKDLTIT). 91-96 (GAGSLG) lines the NAD(+) pocket.

The protein belongs to the transcriptional regulatory Rex family. As to quaternary structure, homodimer.

The protein resides in the cytoplasm. Modulates transcription in response to changes in cellular NADH/NAD(+) redox state. This is Redox-sensing transcriptional repressor Rex from Treponema denticola (strain ATCC 35405 / DSM 14222 / CIP 103919 / JCM 8153 / KCTC 15104).